A 58-amino-acid chain; its full sequence is Lantibiotic macedovicin (58 aa).

Residues 1-25 constitute a propeptide that is removed on maturation; that stretch reads MMNATENQIFVETVSDQELEMLIGG. A 2,3-didehydrobutyrine mark is found at threonine 33 and threonine 35. 2 consecutive cross-links (beta-methyllanthionine (Thr-Cys)) follow at residues 33-38 and 35-57; these read TLTKDC and TKDC…CKNC. A disulfide bridge connects residues cysteine 46 and cysteine 54.

Maturation of macedovicin involves the enzymatic dehydration of Thr-33 and Thr-35 into dehydrobutyrine residues, that can form a beta-methyllanthionine bond with Cys-38 and Cys-57, respectively. This is followed by membrane translocation and cleavage of the modified precursor.

The protein localises to the secreted. Lanthionine-containing peptide antibiotic (lantibiotic) active on Gram-positive bacteria. Macedovicin inhibits a broad spectrum of lactic acid bacteria, several food spoilage species (e.g. Clostridium spp.) and oral streptococci. The bactericidal activity of lantibiotics is based on depolarization of energized bacterial cytoplasmic membranes, initiated by the formation of aqueous transmembrane pores. In Streptococcus macedonicus (strain ACA-DC 198), this protein is Lantibiotic macedovicin.